The primary structure comprises 301 residues: GTPase Era (301 aa).

One can recognise an Era-type G domain in the interval 4–173 (KAGFVALIGK…LECISKHLSP (170 aa)). The segment at 12–19 (GKPNAGKS) is G1. Residue 12 to 19 (GKPNAGKS) coordinates GTP. Residues 38–42 (NATRK) form a G2 region. The interval 64–67 (DTPG) is G3. Residues 64–68 (DTPGL) and 122–125 (SKID) contribute to the GTP site. The segment at 122-125 (SKID) is G4. The tract at residues 152–154 (LSA) is G5. In terms of domain architecture, KH type-2 spans 204-280 (LSDEIPYESD…FLNLQVIAQK (77 aa)).

It belongs to the TRAFAC class TrmE-Era-EngA-EngB-Septin-like GTPase superfamily. Era GTPase family. As to quaternary structure, monomer.

It is found in the cytoplasm. It localises to the cell inner membrane. Functionally, an essential GTPase that binds both GDP and GTP, with rapid nucleotide exchange. Plays a role in 16S rRNA processing and 30S ribosomal subunit biogenesis and possibly also in cell cycle regulation and energy metabolism. The chain is GTPase Era from Helicobacter pylori (strain Shi470).